Here is a 419-residue protein sequence, read N- to C-terminus: WD repeat-containing protein JIP5 (419 aa).

7 WD repeats span residues 4–45, 66–105, 108–147, 180–220, 224–263, 268–308, and 351–390; these read ALSS…HNQS, PSHKSCRGVAFDASGSNLFCIFKDKSIIALDPSDGHVKAR, RAHESAPSRILPIHEGLMATGDDDGIVRLWDPRCPPEGDA, DQED…KGVE, DQEDELLSIASIKNGKKLVVGTQLGVLSLWAPDRGLLDHA, GHPS…GIVG, and DAAEPEPAVMLVSDEAHLIARSADGSDESAGESDVMQPPP. The segment at 172–192 is disordered; the sequence is DPPRSKKKDQEDDLKRKRDEE. The segment at 372–408 is disordered; sequence SADGSDESAGESDVMQPPPATKRRTAKSKAGKKSVHD. Residues 392-404 show a composition bias toward basic residues; sequence TKRRTAKSKAGKK.

The protein belongs to the WD repeat WDR55 family.

The protein localises to the nucleus. Its subcellular location is the nucleolus. This chain is WD repeat-containing protein JIP5 (JIP5), found in Malassezia globosa (strain ATCC MYA-4612 / CBS 7966) (Dandruff-associated fungus).